Reading from the N-terminus, the 1134-residue chain is ATP-dependent helicase/deoxyribonuclease subunit B (1134 aa).

Residue 8–15 participates in ATP binding; the sequence is GRAGSGKS. Residues C771, C1089, C1092, and C1098 each contribute to the [4Fe-4S] cluster site.

The protein belongs to the helicase family. AddB/RexB type 1 subfamily. As to quaternary structure, heterodimer of AddA and AddB. The cofactor is Mg(2+). [4Fe-4S] cluster serves as cofactor.

Functionally, the heterodimer acts as both an ATP-dependent DNA helicase and an ATP-dependent, dual-direction single-stranded exonuclease. Recognizes the chi site generating a DNA molecule suitable for the initiation of homologous recombination. The AddB subunit has 5' -&gt; 3' nuclease activity but not helicase activity. The polypeptide is ATP-dependent helicase/deoxyribonuclease subunit B (Clostridium novyi (strain NT)).